The sequence spans 257 residues: MTAIRVCSRKFPTFASIFFQNITRNPSIHRISFSNLKPKTLLHPIPPKPFTVFVSRFHDGRPRGPLWRGKKLIGKEALFVILGLKRLKEDDEKLDKFIKTHVFRLLKLDMLAVIGELERQEETALAIKMFEVIQKQEWYQPDVFMYKDLIVSLAKSKRMDEAMALWEKMKKENLFPDSQTYTEVIRGFLRDGCPADAMNVYEDMLKSPDPPEELPFRVLLKGLLPHPLLRNKVKKDFEELFPEKHAYDPPEEIFGRC.

The N-terminal 55 residues, 1-55 (MTAIRVCSRKFPTFASIFFQNITRNPSIHRISFSNLKPKTLLHPIPPKPFTVFVS), are a transit peptide targeting the chloroplast. PPR repeat units follow at residues 142–176 (DVFM…NLFP) and 177–211 (DSQT…PDPP).

The protein belongs to the PPR family. P subfamily.

The protein localises to the plastid. Its subcellular location is the chloroplast. Functionally, binds weakly to specific single strand RNA (ssRNA). This Arabidopsis thaliana (Mouse-ear cress) protein is Protein THYLAKOID ASSEMBLY 8-like, chloroplastic.